Reading from the N-terminus, the 341-residue chain is Elongation factor Ts (341 aa).

The involved in Mg(2+) ion dislocation from EF-Tu stretch occupies residues 80 to 83 (TDFV).

Belongs to the EF-Ts family.

Its subcellular location is the cytoplasm. In terms of biological role, associates with the EF-Tu.GDP complex and induces the exchange of GDP to GTP. It remains bound to the aminoacyl-tRNA.EF-Tu.GTP complex up to the GTP hydrolysis stage on the ribosome. In Lactobacillus acidophilus (strain ATCC 700396 / NCK56 / N2 / NCFM), this protein is Elongation factor Ts.